Reading from the N-terminus, the 247-residue chain is Myeloid leukemia factor 2 (247 aa).

The disordered stretch occupies residues 122–247 (ETSEMRSAPG…PSRQSRRYDW (126 aa)). Residues 134–144 (RETRRTVRDSD) are compositionally biased toward basic and acidic residues. Residues 154–169 (HHIRDRAHILQRSRNH) show a composition bias toward basic residues. A compositionally biased stretch (basic and acidic residues) spans 170–179 (RTGDQEERQD). Positions 182-192 (NLDESEAAAFD) are enriched in acidic residues. Over residues 193-225 (DEWRRETSRYRQQRPLEFRRHEASVGGGRRAEG) the composition is skewed to basic and acidic residues. 3 positions are modified to phosphoserine: serine 216, serine 237, and serine 239.

Belongs to the MLF family.

Its subcellular location is the cytoplasm. It localises to the nucleus. This Mus musculus (Mouse) protein is Myeloid leukemia factor 2 (Mlf2).